The following is a 139-amino-acid chain: MSYCRQEGKDRIIFVTKEDHETPSSAELVADDPNDPYEEHGLILPNGDINWNCPCLGGMASGPCGEQFKSAFSCFHYSTEDIKGSDCIDQFRAMQECMQKYPDLYPQDEEEEEEAKPVEPVEETADTKVSAAKEQGTSS.

3 disulfides stabilise this stretch: Cys53/Cys55, Cys64/Cys97, and Cys74/Cys87. In terms of domain architecture, CHCH spans 61–105 (SGPCGEQFKSAFSCFHYSTEDIKGSDCIDQFRAMQECMQKYPDLY). 2 short sequence motifs (cx9C motif) span residues 64-74 (CGEQFKSAFSC) and 87-97 (CIDQFRAMQEC). The disordered stretch occupies residues 102–139 (PDLYPQDEEEEEEAKPVEPVEETADTKVSAAKEQGTSS). Residues 106–124 (PQDEEEEEEAKPVEPVEET) show a composition bias toward acidic residues.

Monomer. Can form homooligomers. Interacts with GFER and forms transient disulfide bonds with GFER. Interacts with MICU1. Interacts with COX19 forming transient intermolecular disulfide bridges. Interacts with COA7 through transient intermolecular disulfide bonds. Interacts with AIFM1; the interaction increases in presence of NADH. Interacts with NDUFB10. Post-translationally, forms intrachain disulfide bridges, but exists in different redox states. In terms of tissue distribution, widely expressed. Present at high level in liver and kidney, followed by lung, brain, heart and spleen (at protein level).

Its subcellular location is the mitochondrion intermembrane space. Functionally, central component of a redox-sensitive mitochondrial intermembrane space import machinery which is required for the biogenesis of respiratory chain complexes. Functions as chaperone and catalyzes the formation of disulfide bonds in substrate proteins, such as COX17, COX19, MICU1 and COA7. Required for the import and folding of small cysteine-containing proteins (small Tim) in the mitochondrial intermembrane space (IMS). Required for the import of COA7 in the IMS. Precursor proteins to be imported into the IMS are translocated in their reduced form into the mitochondria. The oxidized form of CHCHD4/MIA40 forms a transient intermolecular disulfide bridge with the reduced precursor protein, resulting in oxidation of the precursor protein that now contains an intramolecular disulfide bond and is able to undergo folding in the IMS. Reduced CHCHD4/MIA40 is then reoxidized by GFER/ERV1 via a disulfide relay system. Mediates formation of disulfide bond in MICU1 in the IMS, promoting formation of the MICU1-MICU2 heterodimer that regulates mitochondrial calcium uptake. The polypeptide is Mitochondrial intermembrane space import and assembly protein 40 (Chchd4) (Mus musculus (Mouse)).